The chain runs to 316 residues: Apolipoprotein E (316 aa).

The first 18 residues, 1-18 (MKVLWVALVITLLAGCQA), serve as a signal peptide directing secretion. 8 repeat units span residues 79-100 (VLMDETMKEVKAYREELEGQLG), 101-122 (PIAQETQARVSKELQAAQARLA), 123-144 (SDMEDVRSRVAQYRSEVQALMG), 145-166 (QTTDELRGRLASHLRKLRKRLL), 167-188 (RDAEDLQKRLVVYRAGALEGSE), 189-210 (RSVSAIRERLGPLVEQGRVRAA), 211-232 (TVGTLASQTLRERAEAWHQKLR), and 233-254 (GRMEEMGTQARDHLEEMREQLE). The 8 X 22 AA approximate tandem repeats stretch occupies residues 79-254 (VLMDETMKEV…HLEEMREQLE (176 aa)). An LDL and other lipoprotein receptors binding region spans residues 157–167 (HLRKLRKRLLR). 161–164 (LRKR) contacts heparin. The lipid-binding and lipoprotein association stretch occupies residues 209 to 289 (AATVGTLASQ…SWFEPLVEDM (81 aa)). 228 to 235 (HQKLRGRM) contributes to the heparin binding site. Residues 265–316 (SQMRLQAEAFQARLKSWFEPLVEDMQRQWAGLVEKVQLAMATGPTSAPIENN) are homooligomerization. Residues 277-289 (RLKSWFEPLVEDM) are specificity for association with VLDL.

Belongs to the apolipoprotein A1/A4/E family. In terms of assembly, homotetramer. May interact with ABCA1; functionally associated with ABCA1 in the biogenesis of HDLs. May interact with APP/A4 amyloid-beta peptide; the interaction is extremely stable in vitro but its physiological significance is unclear. May interact with MAPT. May interact with MAP2. In the cerebrospinal fluid, interacts with secreted SORL1. Interacts with PMEL; this allows the loading of PMEL luminal fragment on ILVs to induce fibril nucleation. In terms of processing, APOE exists as multiple glycosylated and sialylated glycoforms within cells and in plasma. The extent of glycosylation and sialylation are tissue and context specific. Glycated in plasma VLDL. Post-translationally, phosphorylated by FAM20C in the extracellular medium.

The protein resides in the secreted. It is found in the extracellular space. Its subcellular location is the extracellular matrix. The protein localises to the extracellular vesicle. It localises to the endosome. The protein resides in the multivesicular body. Its function is as follows. APOE is an apolipoprotein, a protein associating with lipid particles, that mainly functions in lipoprotein-mediated lipid transport between organs via the plasma and interstitial fluids. APOE is a core component of plasma lipoproteins and is involved in their production, conversion and clearance. Apolipoproteins are amphipathic molecules that interact both with lipids of the lipoprotein particle core and the aqueous environment of the plasma. As such, APOE associates with chylomicrons, chylomicron remnants, very low density lipoproteins (VLDL) and intermediate density lipoproteins (IDL) but shows a preferential binding to high-density lipoproteins (HDL). It also binds a wide range of cellular receptors including the LDL receptor/LDLR and the very low-density lipoprotein receptor/VLDLR that mediate the cellular uptake of the APOE-containing lipoprotein particles. Finally, APOE also has a heparin-binding activity and binds heparan-sulfate proteoglycans on the surface of cells, a property that supports the capture and the receptor-mediated uptake of APOE-containing lipoproteins by cells. This is Apolipoprotein E (APOE) from Tursiops truncatus (Atlantic bottle-nosed dolphin).